The primary structure comprises 514 residues: Peptide chain release factor 3 (514 aa).

One can recognise a tr-type G domain in the interval 8-268 (KKRRTFAIIS…IFLKFAPEPH (261 aa)). Residues 17 to 24 (SHPDAGKT), 85 to 89 (DTPGH), and 139 to 142 (NKLD) each bind GTP.

It belongs to the TRAFAC class translation factor GTPase superfamily. Classic translation factor GTPase family. PrfC subfamily.

It localises to the cytoplasm. Functionally, increases the formation of ribosomal termination complexes and stimulates activities of RF-1 and RF-2. It binds guanine nucleotides and has strong preference for UGA stop codons. It may interact directly with the ribosome. The stimulation of RF-1 and RF-2 is significantly reduced by GTP and GDP, but not by GMP. In Streptococcus pneumoniae (strain P1031), this protein is Peptide chain release factor 3.